Here is a 463-residue protein sequence, read N- to C-terminus: ATP-dependent rRNA helicase SPB4 (463 aa).

The Q motif signature appears at lysine 4–leucine 32. One can recognise a Helicase ATP-binding domain in the interval isoleucine 35–isoleucine 205. Serine 48–threonine 55 is an ATP binding site. The short motif at aspartate 153 to aspartate 156 is the DEAD box element. The region spanning lysine 226–leucine 382 is the Helicase C-terminal domain. The tract at residues arginine 444 to lysine 463 is disordered. A compositionally biased stretch (basic residues) spans glycine 446–lysine 463.

This sequence belongs to the DEAD box helicase family. DDX55/SPB4 subfamily. Component of pre-60S ribosomal complexes.

The protein localises to the nucleus. It localises to the nucleolus. The enzyme catalyses ATP + H2O = ADP + phosphate + H(+). Its function is as follows. ATP-binding RNA helicase involved in the biogenesis of 60S ribosomal subunits. Binds 90S pre-ribosomal particles and dissociates from pre-60S ribosomal particles after processing of 27SB pre-rRNA. Required for the normal formation of 18S rRNA through the processing of pre-rRNAs at sites A0, A1 and A2, and the normal formation of 25S and 5.8S rRNAs through the processing of pre-rRNAs at sites C1 and C2. This Encephalitozoon cuniculi (strain GB-M1) (Microsporidian parasite) protein is ATP-dependent rRNA helicase SPB4.